A 538-amino-acid polypeptide reads, in one-letter code: Pyruvate kinase (538 aa).

At Ser45 the chain carries Phosphoserine. Residue Arg72 participates in substrate binding. K(+)-binding residues include Asn74, Ser76, Asp107, and Thr108. 74–77 (NFSH) lines the ATP pocket. ATP contacts are provided by Arg114 and Lys200. Glu265 is a binding site for Mg(2+). Substrate contacts are provided by Gly288, Asp289, and Thr321. Asp289 provides a ligand contact to Mg(2+).

It belongs to the pyruvate kinase family. Homotetramer. Mg(2+) serves as cofactor. Requires K(+) as cofactor.

It catalyses the reaction pyruvate + ATP = phosphoenolpyruvate + ADP + H(+). Its pathway is carbohydrate degradation; glycolysis; pyruvate from D-glyceraldehyde 3-phosphate: step 5/5. The polypeptide is Pyruvate kinase (pki1) (Hypocrea jecorina (Trichoderma reesei)).